Here is a 249-residue protein sequence, read N- to C-terminus: ATP synthase subunit a (249 aa).

6 helical membrane-spanning segments follow: residues 26–46, 84–104, 114–134, 143–163, 185–205, and 208–228; these read FTNSSLFMVATVAAAGAFLYL, FFPFVFSLFMFVLVANLLGLF, IVVTFALALLVIGTVLVYGFW, LFVPEGVPGVLLPLVVLIEVI, ITLKVFAGFVTSLGALGVAGA, and AVLPLAMTVALTGLELLVAFL.

This sequence belongs to the ATPase A chain family. F-type ATPases have 2 components, CF(1) - the catalytic core - and CF(0) - the membrane proton channel. CF(1) has five subunits: alpha(3), beta(3), gamma(1), delta(1), epsilon(1). CF(0) has three main subunits: a(1), b(2) and c(9-12). The alpha and beta chains form an alternating ring which encloses part of the gamma chain. CF(1) is attached to CF(0) by a central stalk formed by the gamma and epsilon chains, while a peripheral stalk is formed by the delta and b chains.

Its subcellular location is the cell inner membrane. Its function is as follows. Key component of the proton channel; it plays a direct role in the translocation of protons across the membrane. This Chelativorans sp. (strain BNC1) protein is ATP synthase subunit a.